The primary structure comprises 906 residues: ATP-dependent DNA helicase DDX11 (906 aa).

A Helicase ATP-binding domain is found at 9–442 (GGIHFPFPFP…KNLMYIKQIL (434 aa)). 44–51 (SPTGTGKS) provides a ligand contact to ATP. The segment at 78 to 111 (APGSGPPSSEKNSLLTSSSCQEPTDTPRPAGEPD) is disordered. Positions 85-96 (SSEKNSLLTSSS) are enriched in low complexity. Position 260 is a phosphoserine (Ser-260). [4Fe-4S] cluster contacts are provided by Cys-265 and Cys-283. Residues 284 to 301 (VDMQRSKREKNGTGEDKP) show a composition bias toward basic and acidic residues. Residues 284-310 (VDMQRSKREKNGTGEDKPKRKRQKIQT) form a disordered region. Residues Cys-312 and Cys-347 each contribute to the [4Fe-4S] cluster site. Residues 390 to 393 (DEAH) carry the DEAH box motif.

It belongs to the DEAD box helicase family. DEAH subfamily. DDX11/CHL1 sub-subfamily. Associates with the CTF18-RFC complex. Associates with a cohesin complex composed of RAD21, SMC1 proteins and SMC3. Interacts with CHTF18. Interacts with DSCC1. Interacts with FEN1; this interaction is direct and increases flap endonuclease activity of FEN1. Interacts with PCNA. Interacts with POLR1A and UBTF. Interacts with RAD21, SMC1 proteins and SMC3. Interacts with RFC2. Interacts with TIMELESS; this interaction increases recruitment of both proteins onto chromatin in response to replication stress induction by hydroxyurea. [4Fe-4S] cluster is required as a cofactor.

The protein localises to the nucleus. Its subcellular location is the nucleolus. It is found in the cytoplasm. The protein resides in the cytoskeleton. It localises to the spindle pole. The protein localises to the midbody. Its subcellular location is the microtubule organizing center. It is found in the centrosome. The catalysed reaction is Couples ATP hydrolysis with the unwinding of duplex DNA at the replication fork by translocating in the 5'-3' direction. This creates two antiparallel DNA single strands (ssDNA). The leading ssDNA polymer is the template for DNA polymerase III holoenzyme which synthesizes a continuous strand.. The enzyme catalyses ATP + H2O = ADP + phosphate + H(+). Functionally, DNA-dependent ATPase and ATP-dependent DNA helicase that participates in various functions in genomic stability, including DNA replication, DNA repair and heterochromatin organization as well as in ribosomal RNA synthesis. Its double-stranded DNA helicase activity requires either a minimal 5'-single-stranded tail length of approximately 15 nt (flap substrates) or 10 nt length single-stranded gapped DNA substrates of a partial duplex DNA structure for helicase loading and translocation along DNA in a 5' to 3' direction. The helicase activity is capable of displacing duplex regions up to 100 bp, which can be extended up to 500 bp by the replication protein A (RPA) or the cohesion CTF18-replication factor C (Ctf18-RFC) complex activities. Also shows ATPase- and helicase activities on substrates that mimic key DNA intermediates of replication, repair and homologous recombination reactions, including forked duplex, anti-parallel G-quadruplex and three-stranded D-loop DNA molecules. Plays a role in DNA double-strand break (DSB) repair at the DNA replication fork during DNA replication recovery from DNA damage. Recruited with TIMELESS factor upon DNA-replication stress response at DNA replication fork to preserve replication fork progression, and hence ensure DNA replication fidelity. Also cooperates with TIMELESS factor during DNA replication to regulate proper sister chromatid cohesion and mitotic chromosome segregation. Stimulates 5'-single-stranded DNA flap endonuclease activity of FEN1 in an ATP- and helicase-independent manner; and hence it may contribute in Okazaki fragment processing at DNA replication fork during lagging strand DNA synthesis. Its ability to function at DNA replication fork is modulated by its binding to long non-coding RNA (lncRNA) cohesion regulator non-coding RNA DDX11-AS1/CONCR, which is able to increase both DDX11 ATPase activity and binding to DNA replicating regions. Also plays a role in heterochromatin organization. Involved in rRNA transcription activation through binding to active hypomethylated rDNA gene loci by recruiting UBTF and the RNA polymerase Pol I transcriptional machinery. Plays a role in embryonic development and prevention of aneuploidy. Involved in melanoma cell proliferation and survival. Associates with chromatin at DNA replication fork regions. Binds to single- and double-stranded DNAs. The protein is ATP-dependent DNA helicase DDX11 of Mus musculus (Mouse).